We begin with the raw amino-acid sequence, 576 residues long: Lysine--tRNA ligase (576 aa).

The Mg(2+) site is built by glutamate 412 and glutamate 419.

Belongs to the class-II aminoacyl-tRNA synthetase family. Homodimer. Mg(2+) is required as a cofactor.

The protein localises to the cytoplasm. The enzyme catalyses tRNA(Lys) + L-lysine + ATP = L-lysyl-tRNA(Lys) + AMP + diphosphate. This is Lysine--tRNA ligase from Parabacteroides distasonis (strain ATCC 8503 / DSM 20701 / CIP 104284 / JCM 5825 / NCTC 11152).